A 276-amino-acid polypeptide reads, in one-letter code: BES1/BZR1 homolog protein 1 (276 aa).

Disordered regions lie at residues 1-30 (MTASGGGSTAATGRMPTWKERENNKKRERR), 76-125 (TTYR…PTRF), and 155-191 (SAPVTPPISSPRRSNPRLPRWQSSNFPVSAPSSPTRR). The segment at 14–87 (RMPTWKEREN…YRKGSRPTET (74 aa)) is required for DNA-binding. Residues 84-103 (PTETTVPCSSIQLSPQSSAF) show a composition bias toward polar residues. The segment covering 104–122 (QSPIPSYQASPSSSSYPSP) has biased composition (low complexity). Threonine 159 carries the phosphothreonine modification. Residues 164–174 (SPRRSNPRLPR) show a composition bias toward low complexity. Over residues 175-189 (WQSSNFPVSAPSSPT) the composition is skewed to polar residues.

This sequence belongs to the BZR/LAT61 family. Post-translationally, phosphorylated. Phosphorylation increases protein degradation.

The sequence is that of BES1/BZR1 homolog protein 1 (BEH1) from Arabidopsis thaliana (Mouse-ear cress).